A 357-amino-acid chain; its full sequence is Peptide chain release factor 1 (357 aa).

Gln236 is subject to N5-methylglutamine.

It belongs to the prokaryotic/mitochondrial release factor family. Methylated by PrmC. Methylation increases the termination efficiency of RF1.

It localises to the cytoplasm. Its function is as follows. Peptide chain release factor 1 directs the termination of translation in response to the peptide chain termination codons UAG and UAA. In Mycolicibacterium vanbaalenii (strain DSM 7251 / JCM 13017 / BCRC 16820 / KCTC 9966 / NRRL B-24157 / PYR-1) (Mycobacterium vanbaalenii), this protein is Peptide chain release factor 1.